The sequence spans 196 residues: Shikimate kinase (196 aa).

32–37 (GAGKSA) provides a ligand contact to ATP. Residue S36 participates in Mg(2+) binding. The substrate site is built by D54, R78, and G100. R138 lines the ATP pocket. Residue R157 participates in substrate binding. R174 lines the ATP pocket.

Belongs to the shikimate kinase family. As to quaternary structure, monomer. Mg(2+) serves as cofactor.

It localises to the cytoplasm. The enzyme catalyses shikimate + ATP = 3-phosphoshikimate + ADP + H(+). Its pathway is metabolic intermediate biosynthesis; chorismate biosynthesis; chorismate from D-erythrose 4-phosphate and phosphoenolpyruvate: step 5/7. Catalyzes the specific phosphorylation of the 3-hydroxyl group of shikimic acid using ATP as a cosubstrate. The sequence is that of Shikimate kinase from Rhizobium leguminosarum bv. trifolii (strain WSM2304).